We begin with the raw amino-acid sequence, 191 residues long: Protein Ves (191 aa).

Belongs to the Ves family.

This is Protein Ves from Escherichia coli (strain ATCC 8739 / DSM 1576 / NBRC 3972 / NCIMB 8545 / WDCM 00012 / Crooks).